The chain runs to 144 residues: Large ribosomal subunit protein uL13 (144 aa).

This sequence belongs to the universal ribosomal protein uL13 family. In terms of assembly, part of the 50S ribosomal subunit.

Its function is as follows. This protein is one of the early assembly proteins of the 50S ribosomal subunit, although it is not seen to bind rRNA by itself. It is important during the early stages of 50S assembly. In Lachnoclostridium phytofermentans (strain ATCC 700394 / DSM 18823 / ISDg) (Clostridium phytofermentans), this protein is Large ribosomal subunit protein uL13.